We begin with the raw amino-acid sequence, 1527 residues long: Peroxidasin (1527 aa).

Residues 1–23 form the signal peptide; the sequence is MRFMLLMLQLLGLLLLLAGGVQS. The LRRNT domain maps to 24–53; it reads VYCPAGCTCLERTVRCIRAKLSAVPKLPQD. LRR repeat units lie at residues 51 to 74, 75 to 98, 99 to 122, 124 to 146, 147 to 170, and 172 to 196; these read PQDT…AFSG, LAQL…ALNG, LTAL…IFQR, PRLE…LFDN, LPRL…GFNR, and NNLK…LWRR. 4 consecutive Ig-like C2-type domains span residues 236-322, 365-453, 458-545, and 553-643; these read PQFL…QPVR, PHFT…ARIE, PEIL…ATIK, and PQLA…ALVT. Disulfide bonds link Cys257–Cys307, Cys388–Cys437, Cys479–Cys529, and Cys574–Cys627. Asn419 carries N-linked (GlcNAc...) asparagine glycosylation. N-linked (GlcNAc...) asparagine glycans are attached at residues Asn616, Asn673, Asn682, Asn731, and Asn767. A disulfide bond links Cys768 and Cys784. A heme b-binding site is contributed by Asp862. Catalysis depends on His863, which acts as the Proton acceptor. Asp864 contacts Ca(2+). Intrachain disulfides connect Cys882–Cys892 and Cys886–Cys909. Ca(2+) is bound by residues Thr941, Tyr943, Asp945, and Ser947. N-linked (GlcNAc...) asparagine glycosylation occurs at Asn962. An intrachain disulfide couples Cys994 to Cys1005. The heme b site is built by Glu1015 and His1109. Residues Asn1120 and Asn1213 are each glycosylated (N-linked (GlcNAc...) asparagine). Intrachain disulfides connect Cys1212–Cys1269 and Cys1310–Cys1336. Residues 1403-1441 adopt a coiled-coil conformation; it reads NEERVSGLEELIGSFQKELKKLHKKLRKLEDSCNSADSE. Residues 1463–1524 enclose the VWFC domain; sequence SHCVDDKGTT…PPEACCPHCP (62 aa).

This sequence belongs to the peroxidase family. XPO subfamily. Homotrimer; disulfide-linked. Ca(2+) is required as a cofactor. Heme b serves as cofactor. As to expression, expressed in hemocytes. Also expressed in the fat body and gastric caeca.

It is found in the secreted. It carries out the reaction (5R)-5-hydroxy-L-lysyl-[collagen] + L-methionyl-[collagen] + H2O2 = [collagen]-(5R)-5-hydroxy-L-lysyl-N-S-L-methionyl-[collagen] + 2 H2O + H(+). The enzyme catalyses bromide + H2O2 = hypobromite + H2O. It catalyses the reaction (5R)-5-hydroxy-L-lysyl-[collagen] + L-methionyl-[collagen] + hypobromite = [collagen]-(5R)-5-hydroxy-L-lysyl-N-S-L-methionyl-[collagen] + bromide + H2O + H(+). The catalysed reaction is L-lysyl-[collagen] + L-methionyl-[collagen] + H2O2 = [collagen]-L-lysyl-N-S-L-methionyl-[collagen] + 2 H2O + H(+). It carries out the reaction L-lysyl-[collagen] + L-methionyl-[collagen] + hypobromite = [collagen]-L-lysyl-N-S-L-methionyl-[collagen] + bromide + H2O + H(+). The enzyme catalyses L-tyrosyl-[protein] + bromide + H2O2 + H(+) = 3-bromo-L-tyrosyl-[protein] + 2 H2O. It catalyses the reaction hypobromite + L-tyrosyl-[protein] + H(+) = 3-bromo-L-tyrosyl-[protein] + H2O. Catalyzes the two-electron oxidation of bromide by hydrogen peroxide and generates hypobromite as a reactive intermediate which mediates the formation of sulfilimine cross-links between methionine and hydroxylysine residues within an uncross-linked collagen IV NC1 hexamer. Plays a role in extracellular matrix consolidation, phagocytosis and defense. The protein is Peroxidasin of Drosophila melanogaster (Fruit fly).